Here is a 226-residue protein sequence, read N- to C-terminus: ATP synthase subunit a (226 aa).

The next 5 membrane-spanning stretches (helical) occupy residues 18-38 (LSLN…TYWL), 74-94 (FVSL…PYIF), 100-120 (LTLT…YGWI), 162-182 (LTAN…TGPM), and 187-207 (IILS…SAVA).

Belongs to the ATPase A chain family. As to quaternary structure, F-type ATPases have 2 components, CF(1) - the catalytic core - and CF(0) - the membrane proton channel. CF(1) has five subunits: alpha(3), beta(3), gamma(1), delta(1), epsilon(1). CF(0) has three main subunits: a, b and c.

It localises to the mitochondrion inner membrane. Its function is as follows. Mitochondrial membrane ATP synthase (F(1)F(0) ATP synthase or Complex V) produces ATP from ADP in the presence of a proton gradient across the membrane which is generated by electron transport complexes of the respiratory chain. F-type ATPases consist of two structural domains, F(1) - containing the extramembraneous catalytic core and F(0) - containing the membrane proton channel, linked together by a central stalk and a peripheral stalk. During catalysis, ATP synthesis in the catalytic domain of F(1) is coupled via a rotary mechanism of the central stalk subunits to proton translocation. Key component of the proton channel; it may play a direct role in the translocation of protons across the membrane. This Aedes aegypti (Yellowfever mosquito) protein is ATP synthase subunit a.